The chain runs to 529 residues: Bifunctional purine biosynthesis protein PurH (529 aa).

An MGS-like domain is found at 1–148 (MQQRRPVRRA…KNHKDVAIVV (148 aa)).

This sequence belongs to the PurH family.

The enzyme catalyses (6R)-10-formyltetrahydrofolate + 5-amino-1-(5-phospho-beta-D-ribosyl)imidazole-4-carboxamide = 5-formamido-1-(5-phospho-D-ribosyl)imidazole-4-carboxamide + (6S)-5,6,7,8-tetrahydrofolate. The catalysed reaction is IMP + H2O = 5-formamido-1-(5-phospho-D-ribosyl)imidazole-4-carboxamide. Its pathway is purine metabolism; IMP biosynthesis via de novo pathway; 5-formamido-1-(5-phospho-D-ribosyl)imidazole-4-carboxamide from 5-amino-1-(5-phospho-D-ribosyl)imidazole-4-carboxamide (10-formyl THF route): step 1/1. The protein operates within purine metabolism; IMP biosynthesis via de novo pathway; IMP from 5-formamido-1-(5-phospho-D-ribosyl)imidazole-4-carboxamide: step 1/1. The chain is Bifunctional purine biosynthesis protein PurH from Klebsiella pneumoniae subsp. pneumoniae (strain ATCC 700721 / MGH 78578).